The chain runs to 319 residues: Ferrochelatase (319 aa).

Residues His-194 and Glu-275 each coordinate Fe cation.

Belongs to the ferrochelatase family.

The protein resides in the cytoplasm. The enzyme catalyses heme b + 2 H(+) = protoporphyrin IX + Fe(2+). Its pathway is porphyrin-containing compound metabolism; protoheme biosynthesis; protoheme from protoporphyrin-IX: step 1/1. Catalyzes the ferrous insertion into protoporphyrin IX. In Vibrio vulnificus (strain YJ016), this protein is Ferrochelatase.